Here is a 287-residue protein sequence, read N- to C-terminus: MDKVKIALQYLMPKHLVSRIVGKFAAAEAGFVTTAFIKWFIKQYGINMSEALHSNPEAYKTFNDFFTRELKPGLRPIDQAEDIMVHPVDGAVSQLGPIEDGRIFQAKGHHYSALALLGGQADDAARFEEGDFATIYLAPKDYHRIHMPIKGTLSKMTYVPGELFSVNPLTARNVPGLFARNERVVAIFETDKGPLAMVLVGATIVASIETVWAGTVTPPTGKKVFTWDYPTEGPEALTLEKGAEMGRFKLGSTVVMLFAKDAIDDFADGVKPEAVTRMGQPFAKLED.

Catalysis depends on charge relay system; for autoendoproteolytic cleavage activity residues Asp89, His146, and Ser252. Ser252 serves as the catalytic Schiff-base intermediate with substrate; via pyruvic acid; for decarboxylase activity. Residue Ser252 is modified to Pyruvic acid (Ser); by autocatalysis.

Belongs to the phosphatidylserine decarboxylase family. PSD-B subfamily. Prokaryotic type I sub-subfamily. In terms of assembly, heterodimer of a large membrane-associated beta subunit and a small pyruvoyl-containing alpha subunit. The cofactor is pyruvate. Post-translationally, is synthesized initially as an inactive proenzyme. Formation of the active enzyme involves a self-maturation process in which the active site pyruvoyl group is generated from an internal serine residue via an autocatalytic post-translational modification. Two non-identical subunits are generated from the proenzyme in this reaction, and the pyruvate is formed at the N-terminus of the alpha chain, which is derived from the carboxyl end of the proenzyme. The autoendoproteolytic cleavage occurs by a canonical serine protease mechanism, in which the side chain hydroxyl group of the serine supplies its oxygen atom to form the C-terminus of the beta chain, while the remainder of the serine residue undergoes an oxidative deamination to produce ammonia and the pyruvoyl prosthetic group on the alpha chain. During this reaction, the Ser that is part of the protease active site of the proenzyme becomes the pyruvoyl prosthetic group, which constitutes an essential element of the active site of the mature decarboxylase.

Its subcellular location is the cell membrane. It carries out the reaction a 1,2-diacyl-sn-glycero-3-phospho-L-serine + H(+) = a 1,2-diacyl-sn-glycero-3-phosphoethanolamine + CO2. It participates in phospholipid metabolism; phosphatidylethanolamine biosynthesis; phosphatidylethanolamine from CDP-diacylglycerol: step 2/2. Catalyzes the formation of phosphatidylethanolamine (PtdEtn) from phosphatidylserine (PtdSer). This Shewanella amazonensis (strain ATCC BAA-1098 / SB2B) protein is Phosphatidylserine decarboxylase proenzyme.